The primary structure comprises 495 residues: Ectonucleoside triphosphate diphosphohydrolase 8 (495 aa).

Topologically, residues 1–8 (MGLTWKQR) are cytoplasmic. Residues 9 to 29 (VFTALLGAAAVSGLTALLLVL) form a helical membrane-spanning segment. Residues 30–466 (VGTMNVLLPP…PAQGWAQSFG (437 aa)) lie on the Extracellular side of the membrane. A disulfide bridge links C78 with C102. The Proton acceptor role is filled by E168. A disulfide bridge connects residues C246 and C292. N303 and N324 each carry an N-linked (GlcNAc...) asparagine glycan. 2 disulfide bridges follow: C328/C334 and C380/C403. A helical membrane pass occupies residues 467–487 (VWAAGVVFVVLTLAATLGAVA). The Cytoplasmic segment spans residues 488–495 (VQVFWLQD).

This sequence belongs to the GDA1/CD39 NTPase family. Ca(2+) is required as a cofactor. The cofactor is Mg(2+). Post-translationally, N-glycosylated.

The protein localises to the cell membrane. It carries out the reaction a ribonucleoside 5'-triphosphate + 2 H2O = a ribonucleoside 5'-phosphate + 2 phosphate + 2 H(+). Its function is as follows. Canalicular ectonucleoside NTPDase responsible for the main hepatic NTPDase activity. Ectonucleoside NTPDases catalyze the hydrolysis of gamma- and beta-phosphate residues of nucleotides, playing a central role in concentration of extracellular nucleotides. Has activity toward ATP, ADP, UTP and UDP, but not toward AMP. This is Ectonucleoside triphosphate diphosphohydrolase 8 (ENTPD8) from Bos taurus (Bovine).